A 451-amino-acid chain; its full sequence is Phosphoglucosamine mutase (451 aa).

Catalysis depends on serine 101, which acts as the Phosphoserine intermediate. Mg(2+)-binding residues include serine 101, aspartate 240, aspartate 242, and aspartate 244. A Phosphoserine modification is found at serine 101.

This sequence belongs to the phosphohexose mutase family. The cofactor is Mg(2+). Activated by phosphorylation.

The catalysed reaction is alpha-D-glucosamine 1-phosphate = D-glucosamine 6-phosphate. Catalyzes the conversion of glucosamine-6-phosphate to glucosamine-1-phosphate. This chain is Phosphoglucosamine mutase, found in Streptococcus pyogenes serotype M1.